Consider the following 2605-residue polypeptide: Protein ABERRANT POLLEN TRANSMISSION 1 (2605 aa).

A signal peptide spans 1–43; it reads MMLGLVQLLVGFVVAWEAVELVLRHGLLLSVFKLAILAALAAA. A disordered region spans residues 137–158; it reads STNKKKPAPRKPISTTTAKAKG. N-linked (GlcNAc...) asparagine glycosylation is found at asparagine 232, asparagine 320, asparagine 348, asparagine 516, asparagine 587, asparagine 628, asparagine 696, asparagine 779, asparagine 1171, asparagine 1318, and asparagine 1459. Residues 305-326 are disordered; it reads SASTVAEQKDEPSVDNKSAARS. Basic and acidic residues predominate over residues 311-326; the sequence is EQKDEPSVDNKSAARS. The interval 1761–1818 is disordered; sequence MSKDGALSSVSSTSQPSEPQQIKSSESPPSNGSGKPDLTSSSENALKRSNNSDSEEEG. Positions 1768 to 1781 are enriched in low complexity; that stretch reads SSVSSTSQPSEPQQ. Polar residues predominate over residues 1782–1812; that stretch reads IKSSESPPSNGSGKPDLTSSSENALKRSNNS. N-linked (GlcNAc...) asparagine glycans are attached at residues asparagine 1791, asparagine 1810, asparagine 2003, asparagine 2280, and asparagine 2291. 2 disordered regions span residues 2269–2312 and 2332–2361; these read VSTT…SSFD and EGQT…REDK. Over residues 2281–2300 the composition is skewed to polar residues; sequence TSVAETNSPNNQSSKETTFA. Basic and acidic residues-rich tracts occupy residues 2303–2312 and 2343–2361; these read PELRRTSSFD and DAAK…REDK. Asparagine 2468 and asparagine 2564 each carry an N-linked (GlcNAc...) asparagine glycan. Residues 2574–2605 are disordered; it reads TELEVAELPPRAPGYNTDSSSDSSSAETSPKD.

It belongs to the SABRE family. Mature pollen-specific.

It localises to the secreted. Its subcellular location is the golgi apparatus. Functionally, may be involved in membrane trafficking. Required for tip growth in pollen tubes and root hairs. The protein is Protein ABERRANT POLLEN TRANSMISSION 1 of Zea mays (Maize).